Consider the following 210-residue polypeptide: MTYSVKEIFLTLQGEGGQAGKAAVFCRFSGCNLWSGREQDRAKAVCTFCDTDFVGTDGENGGKFATAEDLAAAVEAQWTGGPDDRLVVCTGGEPFLQLDDAAIAALHARGFQIAVETNGTITAPAGVDWICVSPKADAPVVQTSGQELKLVFPQEKAMPERFAALDFERFYLQPMDGPDRDANTQLAVAYCLSHPQWRLSVQTHKYLGLP.

Residues 12–14 (LQG) and Arg27 contribute to the substrate site. The Radical SAM core domain maps to 18–210 (QAGKAAVFCR…VQTHKYLGLP (193 aa)). Positions 31, 46, and 49 each coordinate [4Fe-4S] cluster. Residue Thr51 coordinates Mg(2+). Substrate is bound at residue Thr90. S-adenosyl-L-methionine is bound by residues Gly92, 133–135 (SPK), and 173–176 (QPMD). Pro210 serves as a coordination point for substrate.

It belongs to the radical SAM superfamily. 7-carboxy-7-deazaguanine synthase family. Homodimer. It depends on [4Fe-4S] cluster as a cofactor. The cofactor is S-adenosyl-L-methionine. Mg(2+) is required as a cofactor.

It catalyses the reaction 6-carboxy-5,6,7,8-tetrahydropterin + H(+) = 7-carboxy-7-deazaguanine + NH4(+). It participates in purine metabolism; 7-cyano-7-deazaguanine biosynthesis. Its function is as follows. Catalyzes the complex heterocyclic radical-mediated conversion of 6-carboxy-5,6,7,8-tetrahydropterin (CPH4) to 7-carboxy-7-deazaguanine (CDG), a step common to the biosynthetic pathways of all 7-deazapurine-containing compounds. The sequence is that of 7-carboxy-7-deazaguanine synthase from Caulobacter vibrioides (strain ATCC 19089 / CIP 103742 / CB 15) (Caulobacter crescentus).